Consider the following 348-residue polypeptide: Holliday junction branch migration complex subunit RuvB (348 aa).

A compositionally biased stretch (polar residues) spans methionine 1 to serine 10. The segment at methionine 1 to leucine 41 is disordered. The large ATPase domain (RuvB-L) stretch occupies residues proline 13 to tyrosine 197. Basic and acidic residues predominate over residues serine 28–leucine 41. ATP-binding residues include leucine 36, arginine 37, glycine 78, lysine 81, threonine 82, threonine 83, arginine 187, tyrosine 197, and arginine 234. Residue threonine 82 coordinates Mg(2+). The segment at glycine 198–arginine 269 is small ATPAse domain (RuvB-S). A head domain (RuvB-H) region spans residues histidine 272–alanine 348. DNA-binding residues include arginine 327 and arginine 332.

This sequence belongs to the RuvB family. As to quaternary structure, homohexamer. Forms an RuvA(8)-RuvB(12)-Holliday junction (HJ) complex. HJ DNA is sandwiched between 2 RuvA tetramers; dsDNA enters through RuvA and exits via RuvB. An RuvB hexamer assembles on each DNA strand where it exits the tetramer. Each RuvB hexamer is contacted by two RuvA subunits (via domain III) on 2 adjacent RuvB subunits; this complex drives branch migration. In the full resolvosome a probable DNA-RuvA(4)-RuvB(12)-RuvC(2) complex forms which resolves the HJ.

The protein resides in the cytoplasm. It carries out the reaction ATP + H2O = ADP + phosphate + H(+). Its function is as follows. The RuvA-RuvB-RuvC complex processes Holliday junction (HJ) DNA during genetic recombination and DNA repair, while the RuvA-RuvB complex plays an important role in the rescue of blocked DNA replication forks via replication fork reversal (RFR). RuvA specifically binds to HJ cruciform DNA, conferring on it an open structure. The RuvB hexamer acts as an ATP-dependent pump, pulling dsDNA into and through the RuvAB complex. RuvB forms 2 homohexamers on either side of HJ DNA bound by 1 or 2 RuvA tetramers; 4 subunits per hexamer contact DNA at a time. Coordinated motions by a converter formed by DNA-disengaged RuvB subunits stimulates ATP hydrolysis and nucleotide exchange. Immobilization of the converter enables RuvB to convert the ATP-contained energy into a lever motion, pulling 2 nucleotides of DNA out of the RuvA tetramer per ATP hydrolyzed, thus driving DNA branch migration. The RuvB motors rotate together with the DNA substrate, which together with the progressing nucleotide cycle form the mechanistic basis for DNA recombination by continuous HJ branch migration. Branch migration allows RuvC to scan DNA until it finds its consensus sequence, where it cleaves and resolves cruciform DNA. The sequence is that of Holliday junction branch migration complex subunit RuvB from Parasynechococcus marenigrum (strain WH8102).